The sequence spans 308 residues: Tetraacyldisaccharide 4'-kinase (308 aa).

63 to 70 (SFGGNGKT) is a binding site for ATP.

This sequence belongs to the LpxK family.

It catalyses the reaction a lipid A disaccharide + ATP = a lipid IVA + ADP + H(+). It functions in the pathway glycolipid biosynthesis; lipid IV(A) biosynthesis; lipid IV(A) from (3R)-3-hydroxytetradecanoyl-[acyl-carrier-protein] and UDP-N-acetyl-alpha-D-glucosamine: step 6/6. Its function is as follows. Transfers the gamma-phosphate of ATP to the 4'-position of a tetraacyldisaccharide 1-phosphate intermediate (termed DS-1-P) to form tetraacyldisaccharide 1,4'-bis-phosphate (lipid IVA). The polypeptide is Tetraacyldisaccharide 4'-kinase (Campylobacter jejuni subsp. jejuni serotype O:6 (strain 81116 / NCTC 11828)).